Here is a 336-residue protein sequence, read N- to C-terminus: Holliday junction branch migration complex subunit RuvB (336 aa).

The segment at glutamine 2–tyrosine 186 is large ATPase domain (RuvB-L). ATP is bound by residues leucine 25, arginine 26, glycine 67, lysine 70, threonine 71, threonine 72, glutamate 133–phenylalanine 135, arginine 176, tyrosine 186, and arginine 223. Threonine 71 serves as a coordination point for Mg(2+). The tract at residues asparagine 187–glutamate 257 is small ATPAse domain (RuvB-S). The segment at serine 260–glutamate 336 is head domain (RuvB-H). DNA is bound by residues arginine 296, arginine 315, and arginine 320.

Belongs to the RuvB family. Homohexamer. Forms an RuvA(8)-RuvB(12)-Holliday junction (HJ) complex. HJ DNA is sandwiched between 2 RuvA tetramers; dsDNA enters through RuvA and exits via RuvB. An RuvB hexamer assembles on each DNA strand where it exits the tetramer. Each RuvB hexamer is contacted by two RuvA subunits (via domain III) on 2 adjacent RuvB subunits; this complex drives branch migration. In the full resolvosome a probable DNA-RuvA(4)-RuvB(12)-RuvC(2) complex forms which resolves the HJ.

It localises to the cytoplasm. The enzyme catalyses ATP + H2O = ADP + phosphate + H(+). In terms of biological role, the RuvA-RuvB-RuvC complex processes Holliday junction (HJ) DNA during genetic recombination and DNA repair, while the RuvA-RuvB complex plays an important role in the rescue of blocked DNA replication forks via replication fork reversal (RFR). RuvA specifically binds to HJ cruciform DNA, conferring on it an open structure. The RuvB hexamer acts as an ATP-dependent pump, pulling dsDNA into and through the RuvAB complex. RuvB forms 2 homohexamers on either side of HJ DNA bound by 1 or 2 RuvA tetramers; 4 subunits per hexamer contact DNA at a time. Coordinated motions by a converter formed by DNA-disengaged RuvB subunits stimulates ATP hydrolysis and nucleotide exchange. Immobilization of the converter enables RuvB to convert the ATP-contained energy into a lever motion, pulling 2 nucleotides of DNA out of the RuvA tetramer per ATP hydrolyzed, thus driving DNA branch migration. The RuvB motors rotate together with the DNA substrate, which together with the progressing nucleotide cycle form the mechanistic basis for DNA recombination by continuous HJ branch migration. Branch migration allows RuvC to scan DNA until it finds its consensus sequence, where it cleaves and resolves cruciform DNA. The chain is Holliday junction branch migration complex subunit RuvB from Alkaliphilus metalliredigens (strain QYMF).